The primary structure comprises 220 residues: Ribose-5-phosphate isomerase A (220 aa).

Substrate is bound by residues 28 to 31 (TGST), 81 to 84 (DGAD), and 94 to 97 (KGGG). The active-site Proton acceptor is the glutamate 103. Lysine 121 is a substrate binding site.

The protein belongs to the ribose 5-phosphate isomerase family. Homodimer.

The catalysed reaction is aldehydo-D-ribose 5-phosphate = D-ribulose 5-phosphate. It participates in carbohydrate degradation; pentose phosphate pathway; D-ribose 5-phosphate from D-ribulose 5-phosphate (non-oxidative stage): step 1/1. Its function is as follows. Catalyzes the reversible conversion of ribose-5-phosphate to ribulose 5-phosphate. The chain is Ribose-5-phosphate isomerase A from Vesicomyosocius okutanii subsp. Calyptogena okutanii (strain HA).